The following is a 185-amino-acid chain: NADH-quinone oxidoreductase subunit B (185 aa).

[4Fe-4S] cluster-binding residues include cysteine 38, cysteine 39, cysteine 104, and cysteine 133.

It belongs to the complex I 20 kDa subunit family. NDH-1 is composed of 14 different subunits. Subunits NuoB, C, D, E, F, and G constitute the peripheral sector of the complex. Requires [4Fe-4S] cluster as cofactor.

It is found in the cell membrane. It catalyses the reaction a quinone + NADH + 5 H(+)(in) = a quinol + NAD(+) + 4 H(+)(out). Its function is as follows. NDH-1 shuttles electrons from NADH, via FMN and iron-sulfur (Fe-S) centers, to quinones in the respiratory chain. The immediate electron acceptor for the enzyme in this species is believed to be a menaquinone. Couples the redox reaction to proton translocation (for every two electrons transferred, four hydrogen ions are translocated across the cytoplasmic membrane), and thus conserves the redox energy in a proton gradient. The chain is NADH-quinone oxidoreductase subunit B from Cutibacterium acnes (strain DSM 16379 / KPA171202) (Propionibacterium acnes).